A 210-amino-acid chain; its full sequence is Thymidylate kinase (210 aa).

11-18 (GVDGSGKS) serves as a coordination point for ATP.

Belongs to the thymidylate kinase family.

The enzyme catalyses dTMP + ATP = dTDP + ADP. Phosphorylation of dTMP to form dTDP in both de novo and salvage pathways of dTTP synthesis. This is Thymidylate kinase from Mycoplasmoides gallisepticum (strain R(low / passage 15 / clone 2)) (Mycoplasma gallisepticum).